We begin with the raw amino-acid sequence, 581 residues long: Arginine--tRNA ligase (581 aa).

The short motif at 126 to 136 is the 'HIGH' region element; that stretch reads PNLAKEMHVGH.

It belongs to the class-I aminoacyl-tRNA synthetase family. As to quaternary structure, monomer.

It is found in the cytoplasm. The catalysed reaction is tRNA(Arg) + L-arginine + ATP = L-arginyl-tRNA(Arg) + AMP + diphosphate. The sequence is that of Arginine--tRNA ligase from Shewanella denitrificans (strain OS217 / ATCC BAA-1090 / DSM 15013).